A 75-amino-acid polypeptide reads, in one-letter code: Putative sulfur carrier protein YrkI (75 aa).

Cys-14 functions as the Cysteine persulfide intermediate in the catalytic mechanism.

This sequence belongs to the sulfur carrier protein TusA family.

This is Putative sulfur carrier protein YrkI (yrkI) from Bacillus subtilis (strain 168).